The primary structure comprises 359 residues: Guanine nucleotide-binding protein alpha-4 subunit (359 aa).

G2 carries the N-myristoyl glycine lipid modification. Residue C3 is the site of S-palmitoyl cysteine attachment. Residues 31–359 (TEVKLLLLGA…RYNLKDCGLF (329 aa)) form the G-alpha domain. Residues 34–47 (KLLLLGAGESGKST) form a G1 motif region. GTP is bound by residues 39 to 46 (GAGESGKS), 178 to 184 (LRARVKS), 203 to 207 (DVGGQ), 272 to 275 (NKMD), and A331. Residue S46 coordinates Mg(2+). Residues 176-184 (DILRARVKS) form a G2 motif region. The G3 motif stretch occupies residues 199 to 208 (FRMFDVGGQR). Residues 268 to 275 (ILFLNKMD) are G4 motif. The G5 motif stretch occupies residues 329–334 (TCATDT).

It belongs to the G-alpha family. G(i/o/t/z) subfamily. G proteins are composed of 3 units; alpha, beta and gamma. The alpha chain contains the guanine nucleotide binding site.

In terms of biological role, guanine nucleotide-binding proteins (G proteins) are involved as modulators or transducers in various transmembrane signaling systems. In Caenorhabditis briggsae, this protein is Guanine nucleotide-binding protein alpha-4 subunit (gpa-4).